Consider the following 556-residue polypeptide: Formate--tetrahydrofolate ligase (556 aa).

65–72 (TPAGEGKT) provides a ligand contact to ATP.

It belongs to the formate--tetrahydrofolate ligase family.

The catalysed reaction is (6S)-5,6,7,8-tetrahydrofolate + formate + ATP = (6R)-10-formyltetrahydrofolate + ADP + phosphate. It participates in one-carbon metabolism; tetrahydrofolate interconversion. The sequence is that of Formate--tetrahydrofolate ligase from Agathobacter rectalis (strain ATCC 33656 / DSM 3377 / JCM 17463 / KCTC 5835 / VPI 0990) (Eubacterium rectale).